The chain runs to 446 residues: Deoxyguanosinetriphosphate triphosphohydrolase-like protein (446 aa).

The interval 1–28 (MSSSVWQERRHGEDKQRRNDHRSPFQRD) is disordered. Basic and acidic residues predominate over residues 7-28 (QERRHGEDKQRRNDHRSPFQRD). The HD domain maps to 59-252 (RLTHSLEVSQ…MELADDIAYA (194 aa)).

Belongs to the dGTPase family. Type 2 subfamily.

This Shewanella sp. (strain MR-7) protein is Deoxyguanosinetriphosphate triphosphohydrolase-like protein.